A 438-amino-acid polypeptide reads, in one-letter code: Prenyltransferase malE (438 aa).

Position 92 (Glu-92) interacts with substrate. Arg-106, Lys-192, Tyr-194, Lys-259, Tyr-261, Tyr-346, and Tyr-411 together coordinate dimethylallyl diphosphate.

The protein belongs to the tryptophan dimethylallyltransferase family.

It catalyses the reaction (S)-3-(indol-3-ylmethyl)-6,7,8,8a-tetrahydropyrrolo[1,2-a]pyrazin-1-one + dimethylallyl diphosphate = (S)-3-{[2-(1,1-dimethylallyl)-indol-3-yl]methyl}-6,7,8,8a-tetrahydropyrrolo[1,2-a]pyrazin-1-one + diphosphate. The catalysed reaction is 1-hydroxy-3-(indol-3-ylmethyl)-6H,7H,8H-5lambda(5)-pyrrolo[1,2-a]pyrazine + dimethylallyl diphosphate = 1-hydroxy-3-{[2-(1,1-dimethylallyl)-indol-3-yl]methyl}-6H,7H,8H-5lambda(5)-pyrrolo[1,2-a]pyrazine + diphosphate. Its pathway is alkaloid biosynthesis. Its function is as follows. Prenyltransferase; part of the gene cluster that mediates the biosynthesis of malbrancheamide, a dichlorinated fungal indole alkaloid that belongs to a family of natural products containing a characteristic bicyclo[2.2.2]diazaoctane core. The first step of malbrancheamide biosynthesis involves coupling of L-proline and L-tryptophan by malG, a bimodular NRPS, to produce L-Pro-L-Trp aldehyde through reductive offloading. This compound undergoes spontaneous cyclization and dehydration to give a dienamine which is reverse prenylated at C-2 by malE. The other prenyltransferase present in the cluster, malB, displays modest activity, suggesting that may be a redundant gene in the pathway. Subsequently, a [4+2] Diels-Alder cyclo-addition catalyzed by the bifunctional enzyme malC forms the characteristic bicyclo[2.2.2]diazaoctane ring of premalbrancheamid. Finally, the flavin-dependent halogenase malA catalyzes the iterative dichlorination of the indole ring of premalbrancheamide to yield C-9 monochlorinated malbrancheamide B, C-8 monochlorinated isomalbrancheamide B, and dichlorinated malbrancheamide. MalA is also able to brominate premalbrancheamide at C-9 to yield malbrancheamide C, and, to a lesser extend, at C-8 to yield isomalbrancheamide C. Finally, malA can brominate C-9 monochlorinated malbrancheamide B at C-8 to yield malbrancheamide D, or C-8 monochlorinated isomalbrancheamide B at C-9 to produce isomalbrancheamide D. The protein is Prenyltransferase malE of Malbranchea aurantiaca.